The primary structure comprises 316 residues: Ribosomal RNA small subunit methyltransferase H (316 aa).

S-adenosyl-L-methionine contacts are provided by residues 35–37, D55, F84, D105, and Q112; that span reads AGH.

The protein belongs to the methyltransferase superfamily. RsmH family.

Its subcellular location is the cytoplasm. It catalyses the reaction cytidine(1402) in 16S rRNA + S-adenosyl-L-methionine = N(4)-methylcytidine(1402) in 16S rRNA + S-adenosyl-L-homocysteine + H(+). In terms of biological role, specifically methylates the N4 position of cytidine in position 1402 (C1402) of 16S rRNA. The polypeptide is Ribosomal RNA small subunit methyltransferase H (Streptococcus uberis (strain ATCC BAA-854 / 0140J)).